Consider the following 185-residue polypeptide: Ribosome-recycling factor (185 aa).

The protein belongs to the RRF family.

The protein localises to the cytoplasm. In terms of biological role, responsible for the release of ribosomes from messenger RNA at the termination of protein biosynthesis. May increase the efficiency of translation by recycling ribosomes from one round of translation to another. The polypeptide is Ribosome-recycling factor (Shewanella sp. (strain ANA-3)).